We begin with the raw amino-acid sequence, 442 residues long: MSEMTPREIVHELDRHIIGQADAKRAVAVALRNRWRRMQLGEEMRHEVTPKNILMIGPTGVGKTEIARRLAKLANAPFIKVEATKFTEVGYVGKEVDSIIRDLTDVAIKLVRETEMEKMKYRAEEAAEERILDALLPNPRNTWGEEEKADNSNTRQIFRKKLREGQLDDKEIELELSASPMGVEIMTPPGMEEMANQLQGLFQNLGQNQKKKRKIKVKEAMKALIEEEAARLVNPEELKQKAIAAVENNGIVFLDEIDKICKRGESSGPDVSREGVQRDLLPLVEGCTVNTKHGMVKTDHILFVASGAFQVARPSDLIPELQGRLPIRVELTALTTDDFERILTEPNASLTDQYKALMATEGVNIEFTKDGIRRLAEAAWQVNERTENIGARRLHTVMERLMEDISFDASEKSGETFVIDTDYVNAHLGKLIEDEDLSRFIL.

ATP is bound by residues Ile18, 60-65 (GVGKTE), Asp255, Glu320, and Arg392.

The protein belongs to the ClpX chaperone family. HslU subfamily. A double ring-shaped homohexamer of HslV is capped on each side by a ring-shaped HslU homohexamer. The assembly of the HslU/HslV complex is dependent on binding of ATP.

The protein resides in the cytoplasm. In terms of biological role, ATPase subunit of a proteasome-like degradation complex; this subunit has chaperone activity. The binding of ATP and its subsequent hydrolysis by HslU are essential for unfolding of protein substrates subsequently hydrolyzed by HslV. HslU recognizes the N-terminal part of its protein substrates and unfolds these before they are guided to HslV for hydrolysis. The protein is ATP-dependent protease ATPase subunit HslU of Aeromonas salmonicida (strain A449).